The primary structure comprises 408 residues: Digeranylgeranylglycerophospholipid reductase 1 (408 aa).

The FAD site is built by alanine 15, glutamate 34, cysteine 45, alanine 46, glycine 48, arginine 99, valine 123, aspartate 279, glycine 291, and isoleucine 292.

It belongs to the geranylgeranyl reductase family. DGGGPL reductase subfamily. The cofactor is FAD.

The catalysed reaction is a 2,3-bis-O-phytanyl-sn-glycerol 1-phospholipid + 8 oxidized 2[4Fe-4S]-[ferredoxin] = a 2,3-bis-O-(geranylgeranyl)-sn-glycerol 1-phospholipid + 8 reduced 2[4Fe-4S]-[ferredoxin] + 16 H(+). The enzyme catalyses 2,3-bis-O-(phytanyl)-sn-glycerol 1-phosphate + 8 oxidized 2[4Fe-4S]-[ferredoxin] = 2,3-bis-O-(geranylgeranyl)-sn-glycerol 1-phosphate + 8 reduced 2[4Fe-4S]-[ferredoxin] + 16 H(+). It carries out the reaction a 2,3-bis-O-phytanyl-sn-glycerol 1-phospholipid + 8 A = a 2,3-bis-O-(geranylgeranyl)-sn-glycerol 1-phospholipid + 8 AH2. It catalyses the reaction CDP-2,3-bis-O-(geranylgeranyl)-sn-glycerol + 8 AH2 = CDP-2,3-bis-O-(phytanyl)-sn-glycerol + 8 A. The catalysed reaction is archaetidylserine + 8 AH2 = 2,3-bis-O-phytanyl-sn-glycero-3-phospho-L-serine + 8 A. It participates in membrane lipid metabolism; glycerophospholipid metabolism. Functionally, is involved in the reduction of 2,3-digeranylgeranylglycerophospholipids (unsaturated archaeols) into 2,3-diphytanylglycerophospholipids (saturated archaeols) in the biosynthesis of archaeal membrane lipids. Catalyzes the formation of archaetidic acid (2,3-di-O-phytanyl-sn-glyceryl phosphate) from 2,3-di-O-geranylgeranylglyceryl phosphate (DGGGP) via the hydrogenation of each double bond of the isoprenoid chains. Is also probably able to reduce double bonds of geranyl groups in CDP-2,3-bis-O-(geranylgeranyl)-sn-glycerol and archaetidylserine, thus acting at various stages in the biosynthesis of archaeal membrane lipids. In Methanococcoides burtonii (strain DSM 6242 / NBRC 107633 / OCM 468 / ACE-M), this protein is Digeranylgeranylglycerophospholipid reductase 1.